The following is a 341-amino-acid chain: L-threonine 3-dehydrogenase (341 aa).

Residue Cys-38 coordinates Zn(2+). Active-site charge relay system residues include Thr-40 and His-43. 6 residues coordinate Zn(2+): His-63, Glu-64, Cys-93, Cys-96, Cys-99, and Cys-107. Residues Ile-175, Asp-195, Arg-200, 262–264, and 286–287 each bind NAD(+); these read LGI and IY.

Belongs to the zinc-containing alcohol dehydrogenase family. Homotetramer. The cofactor is Zn(2+).

It localises to the cytoplasm. The enzyme catalyses L-threonine + NAD(+) = (2S)-2-amino-3-oxobutanoate + NADH + H(+). Its pathway is amino-acid degradation; L-threonine degradation via oxydo-reductase pathway; glycine from L-threonine: step 1/2. Its function is as follows. Catalyzes the NAD(+)-dependent oxidation of L-threonine to 2-amino-3-ketobutyrate. The chain is L-threonine 3-dehydrogenase from Enterobacter sp. (strain 638).